A 583-amino-acid chain; its full sequence is Chloroplast sensor kinase, chloroplastic (583 aa).

A chloroplast-targeting transit peptide spans Met-1–Val-50. Residues Leu-97–Gln-277 are GAF. Position 115 (Cys-115) interacts with [3Fe-4S] cluster. His-292 is subject to Phosphohistidine; by autocatalysis. The segment at Ala-412 to Ala-442 is disordered. Over residues Ser-414 to Ser-431 the composition is skewed to low complexity. One can recognise a Histidine kinase domain in the interval Ser-447–Trp-583.

This sequence belongs to the chloroplast sensor kinase protein family. Oligomerizes. [3Fe-4S] cluster is required as a cofactor. Autophosphorylates, possibly on His-292.

Its subcellular location is the plastid. The protein localises to the chloroplast stroma. The catalysed reaction is ATP + protein L-histidine = ADP + protein N-phospho-L-histidine.. Its function is as follows. Sensor kinase that senses the plastoquinone (PQ) redox state involved in stoichiometry adjustment of both photosystems (e.g. long-term adaptation via transcriptional regulation of reaction center genes of photosystems I and II) and state transitions (e.g. short-term adaptation involving reversible post-translational phosphorylation of light-harvesting complex II, LHC II), thus linking photosynthesis with gene expression in chloroplasts. Reduced PQ suppresses its autophosphorylation activity. This is Chloroplast sensor kinase, chloroplastic from Phaeodactylum tricornutum (strain CCAP 1055/1).